The primary structure comprises 496 residues: Fizzy-related protein homolog (496 aa).

Disordered regions lie at residues 28–51, 64–88, and 105–166; these read RRTL…FIPS, INEN…GKDG, and EKVQ…SPRK. Threonine 32 carries the phosphothreonine modification. The segment covering 32-42 has biased composition (polar residues); that stretch reads TPASSPVSSPS. Serine 36 carries the phosphoserine modification. The involved in APC/FZR1 E3 ubiquitin-protein ligase complex activity stretch occupies residues 47-52; sequence RFIPSR. Lysine 69 bears the N6-acetyllysine mark. 2 stretches are compositionally biased toward basic and acidic residues: residues 76–86 and 106–126; these read KAKDATSDNGK and KVQD…EKKG. Phosphoserine occurs at positions 133, 138, 146, and 151. Residues 146–160 are compositionally biased toward polar residues; sequence SPYSLSPVSNKSQKL. The residue at position 159 (lysine 159) is an N6-acetyllysine. WD repeat units follow at residues 182-222, 227-266, 269-306, 311-350, 353-395, 397-438, and 441-480; these read PELQ…VTRL, VEGD…KLSM, GHTA…LQSE, GHRQ…PVQQ, EHLA…PLQC, DTGS…QVAK, and GHSY…RSTK.

This sequence belongs to the WD repeat CDC20/Fizzy family. The unphosphorylated form interacts with APC/C during mitosis. Interacts with NINL. Interacts (in complex with the anaphase promoting complex APC) with MAD2L2; inhibits FZR1-mediated APC/C activation. Interacts with SIRT2 and USP37. Interacts (via WD repeats) with MAK. Interacts with RBBP8/CtIP; this interaction leads to RBBP8 proteasomal degradation. Interacts with HECW2. Interacts with SASS6; the interaction is regulated by CENATAC and leads to SASS6 proteasomal degradation. Interacts (via N-terminus) with CCNF. Interacts with CDC6. Interacts with TK1 (via the KEN box). Post-translationally, acetylated. Deacetylated by SIRT2 at Lys-69 and Lys-159; deacetylation enhances the interaction of FZR1 with CDC27, leading to activation of anaphase promoting complex/cyclosome (APC/C). In terms of processing, following DNA damage, it is dephosphorylated by CDC14B in G2 phase, leading to its reassociation with the APC/C, and allowing an efficient G2 DNA damage checkpoint. Phosphorylated by MAK. Ubiquitinated by the SCF(CCNF) E3 ubiquitin-protein ligase complex; leading to its degradation by the proteasome. As to expression, isoform 2 is expressed at high levels in heart, liver, spleen and some cancer cell lines whereas isoform 3 is expressed only at low levels in these tissues.

It localises to the nucleus. Its subcellular location is the cytoplasm. It functions in the pathway protein modification; protein ubiquitination. Functionally, substrate-specific adapter for the anaphase promoting complex/cyclosome (APC/C) E3 ubiquitin-protein ligase complex. Associates with the APC/C in late mitosis, in replacement of CDC20, and activates the APC/C during anaphase and telophase. The APC/C remains active in degrading substrates to ensure that positive regulators of the cell cycle do not accumulate prematurely. At the G1/S transition FZR1 is phosphorylated, leading to its dissociation from the APC/C. Following DNA damage, it is required for the G2 DNA damage checkpoint: its dephosphorylation and reassociation with the APC/C leads to the ubiquitination of PLK1, preventing entry into mitosis. Acts as an adapter for APC/C to target the DNA-end resection factor RBBP8/CtIP for ubiquitination and subsequent proteasomal degradation. Through the regulation of RBBP8/CtIP protein turnover, may play a role in DNA damage response, favoring DNA double-strand repair through error-prone non-homologous end joining (NHEJ) over error-free, RBBP8-mediated homologous recombination (HR). This is Fizzy-related protein homolog from Homo sapiens (Human).